Reading from the N-terminus, the 342-residue chain is Thymidylate synthase (342 aa).

DUMP is bound by residues Arg-31 and 156–157; that span reads RR. The active-site Nucleophile is the Cys-176. DUMP-binding positions include 196 to 199, Asn-207, and 237 to 239; these read RSGD and HVY. Asp-199 is a (6R)-5,10-methylene-5,6,7,8-tetrahydrofolate binding site. Ala-341 contributes to the (6R)-5,10-methylene-5,6,7,8-tetrahydrofolate binding site.

It belongs to the thymidylate synthase family. Bacterial-type ThyA subfamily. As to quaternary structure, homodimer.

Its subcellular location is the cytoplasm. The enzyme catalyses dUMP + (6R)-5,10-methylene-5,6,7,8-tetrahydrofolate = 7,8-dihydrofolate + dTMP. It functions in the pathway pyrimidine metabolism; dTTP biosynthesis. Catalyzes the reductive methylation of 2'-deoxyuridine-5'-monophosphate (dUMP) to 2'-deoxythymidine-5'-monophosphate (dTMP) while utilizing 5,10-methylenetetrahydrofolate (mTHF) as the methyl donor and reductant in the reaction, yielding dihydrofolate (DHF) as a by-product. This enzymatic reaction provides an intracellular de novo source of dTMP, an essential precursor for DNA biosynthesis. In Haloferax volcanii (Halobacterium volcanii), this protein is Thymidylate synthase.